Consider the following 2326-residue polypeptide: Nonribosomal peptide synthetase inpB (2326 aa).

A Carrier 1 domain is found at 8–84; it reads SPSEWLQLEL…SLYSMAQGPA (77 aa). The residue at position 45 (Ser45) is an O-(pantetheine 4'-phosphoryl)serine. The disordered stretch occupies residues 87 to 121; that stretch reads ASSSTSDNASDKDSSLDDSETGALTPTTDAGSSLA. Residues 108–121 show a composition bias toward polar residues; that stretch reads GALTPTTDAGSSLA. A condensation 1 region spans residues 144–568; that stretch reads QAVVPCSAIQ…LLSPGEVSQL (425 aa). An adenylation 1 region spans residues 593–997; it reads LQPGAAAVNS…GRRDTQVKIR (405 aa). Residues 1145-1221 enclose the Carrier 2 domain; that stretch reads EPSTETEFKL…DLARAVESRV (77 aa). Ser1182 carries the O-(pantetheine 4'-phosphoryl)serine modification. The tract at residues 1226–1247 is disordered; the sequence is DEEDPAPFSVWRESRGSEPSEE. A condensation 2 region spans residues 1266–1680; sequence EDVLPCTALQ…LLSPEDVNQL (415 aa). An adenylation 2 region spans residues 1702–2097; that stretch reads EVARSRPGAA…GRIDTQIKIR (396 aa). Residues 2216–2294 enclose the Carrier 3 domain; the sequence is PPSTEMEKAL…DLAVLLEKRP (79 aa). Ser2253 carries the post-translational modification O-(pantetheine 4'-phosphoryl)serine.

Belongs to the NRP synthetase family.

Its pathway is secondary metabolite biosynthesis. Nonribosomal peptide synthetase; part of the inp gene cluster that mediates the biosynthesis of fellutamide B, a mycotoxin that acts as a proteasome inhibitor. In the first step of fellutabmide B biosynthesis inpC activates 3-hydroxydodecanoic acid to generate 3-hydroxydodecanoyl-AMP that is then loaded onto the T0 domain of inpB. The 3-hydroxydodecanoyl-S-phosphopantetheinyl-T0 is sequentially extended with L-Asn and L-Gln by the two CAT modules of inpB. The linear lipodipeptide from inpB is then transferred onto inpA for the addition of the third amino acid, L-Leu. Reductive releasing of the lipotripeptide by the TE domain of inpA produces (2S)-fellutamide B. InpF might be involved in the release and transfer of the lipodipeptide from inpB to inpA. The inp cluster-encoded proteasome subunit inpE confers resistance to internally produced fellutamides. The MFS efflux transporter inpD may contribute to fellutamide resistance as well. This Emericella nidulans (strain FGSC A4 / ATCC 38163 / CBS 112.46 / NRRL 194 / M139) (Aspergillus nidulans) protein is Nonribosomal peptide synthetase inpB.